An 893-amino-acid chain; its full sequence is MEKDDPPQLVTPTSVKAIILRIEAAQLTRAQEDISTQLSDILDNVNCVINRFQEELGYDLKENAKSQQRDPKGKKRFILLEKIASFSKDAMMKEKHLYDILRWLGDWGDTLTYEIGPRKSEEEAAALDEWIEVTEKVLPLSLIATKRGIESLTALCSTLIEGQKKRSQVSKRTFWQGWQGRSPQTSPSHPQPLSPEQMLQDQHTMNTKASEVTSMLQELLDSTMFSKGEVRAIRYMATVVENLNKALILQHKENRSLETKYRHLQMQATKELSSQRLHFQQFMEVLESRRDALLKQVEILGGRYHDLLLMKQALEFQLKKAQNATGQAEDLAEVSVDSPGPSERETLPRKETVMEESQQEPMKEEQLFSPLPPSPMAMIRDSGAIAAGHQPLSTMTVRSRVADVFGSKDTESLEPVLLPLVDRRFPKKWERPVAESLGHKDKDQEDYFQKGGLQIKFHCSKQLSLESSRQVTSESQEEPWEEEFGREMRRQLWLEEEEMWQQRQKKWALLEQEHQEKLRQWNLEDLAREQQRRWVQLEKEQESPRREPEQLGEDVERRIFTPTSRWRDLEKAELSLVPAPSRTQSAHQSRRPHLPMSPSTQQPALGKQRPMSSVEFTYRPRTRRVPTKPKKSASFPVTGTSIRRLTWPSLQISPANIKKKVYHMDMEAQRKNLQLLSEESELRLPHYLRSKALELTTTTMELGALRLQYLCHKYIFYRRLQSLRQEAINHVQIMKETEASYKAQNLYIFLENIDRLQSLRLQAWTDKQKGLEEKHRECLSSMVTMFPKLQLEWNVHLNIPEVTSPKPKKCKLPAASPRHIRPSGPTYKQPFLSRHRACVPLQMARQQGKQMEAVWKTEVASSSYAIEKKTPASLPRDQLRGHPDIPRLLTLDV.

Disordered regions lie at residues 177–207 (GWQG…TMNT), 327–376 (QAED…PSPM), 537–557 (LEKE…DVER), 574–611 (LSLV…QRPM), and 806–827 (KPKK…GPTY). Polar residues-rich tracts occupy residues 179 to 188 (QGRSPQTSPS) and 197 to 207 (QMLQDQHTMNT). Positions 303 to 331 (RYHDLLLMKQALEFQLKKAQNATGQAEDL) form a coiled coil. The segment covering 342–353 (SERETLPRKETV) has biased composition (basic and acidic residues).

The protein belongs to the FAM186 family.

The sequence is that of Protein FAM186B (FAM186B) from Homo sapiens (Human).